The chain runs to 189 residues: Protein jagunal homolog (189 aa).

Residues 1–34 (MSSRGVRAAGTDGTDFQNRQRVAQHYQESAQYKS) are Cytoplasmic-facing. A helical membrane pass occupies residues 35-55 (ILKWFFVPHFLILVFMWLKVG). Residues 56-78 (SELLRTNFGWKNAFFDRLDMPSA) are Lumenal-facing. The chain crosses the membrane as a helical span at residues 79 to 99 (YPWEYVWCFSFIPIVLAIYSF). At 100-105 (QRNKLK) the chain is on the cytoplasmic side. A helical membrane pass occupies residues 106–126 (ILHYAYYAEFVVGIFPCMIGL). At 127–150 (GGQLPELMEYAQDMEGSNTPTFKG) the chain is on the lumenal side. Residues 151-171 (IFPMVIIWYIFFAVALQIHGF) form a helical membrane-spanning segment. At 172-189 (SMYFMHHLAAAWAPVKRD) the chain is on the cytoplasmic side.

Belongs to the jagunal family.

The protein localises to the endoplasmic reticulum membrane. The chain is Protein jagunal homolog from Caenorhabditis elegans.